Reading from the N-terminus, the 474-residue chain is Proline--tRNA ligase (474 aa).

This sequence belongs to the class-II aminoacyl-tRNA synthetase family. ProS type 3 subfamily. As to quaternary structure, homodimer.

The protein localises to the cytoplasm. The enzyme catalyses tRNA(Pro) + L-proline + ATP = L-prolyl-tRNA(Pro) + AMP + diphosphate. Functionally, catalyzes the attachment of proline to tRNA(Pro) in a two-step reaction: proline is first activated by ATP to form Pro-AMP and then transferred to the acceptor end of tRNA(Pro). This Onion yellows phytoplasma (strain OY-M) protein is Proline--tRNA ligase.